Reading from the N-terminus, the 361-residue chain is MEYSCVDDSSTTSESLSISTTPKPTTTTEKKLSSPPATSMRLYRMGSGGSSVVLDSENGVETESRKLPSSKYKGVVPQPNGRWGAQIYEKHQRVWLGTFNEEEEAASSYDIAVRRFRGRDAVTNFKSQVDGNDAESAFLDAHSKAEIVDMLRKHTYADEFEQSRRKFVNGDGKRSGLETATYGNDAVLRAREVLFEKTVTPSDVGKLNRLVIPKQHAEKHFPLPAMTTAMGMNPSPTKGVLINLEDRTGKVWRFRYSYWNSSQSYVLTKGWSRFVKEKNLRAGDVVCFERSTGPDRQLYIHWKVRSSPVQTVVRLFGVNIFNVSNEKPNDVAVECVGKKRSREDDLFSLGCSKKQAIINIL.

A disordered region spans residues 1–73; that stretch reads MEYSCVDDSS…SRKLPSSKYK (73 aa). Low complexity predominate over residues 9 to 27; the sequence is SSTTSESLSISTTPKPTTT. The segment at residues 71–126 is a DNA-binding region (AP2/ERF); sequence KYKGVVPQPNGRWGAQIYEKHQRVWLGTFNEEEEAASSYDIAVRRFRGRDAVTNFK. Residues 195-306 constitute a DNA-binding region (TF-B3); that stretch reads FEKTVTPSDV…QLYIHWKVRS (112 aa).

It belongs to the AP2/ERF transcription factor family. RAV subfamily. Interacts with FT. Expressed in leaves.

It is found in the nucleus. Functionally, transcriptional repressor of flowering time on long day plants. Acts directly on FT expression by binding 5'-CAACA-3' and 5'-CACCTG-3 sequences. Functionally redundant with TEM2. The protein is AP2/ERF and B3 domain-containing transcription repressor TEM1 (TEM1) of Arabidopsis thaliana (Mouse-ear cress).